The following is a 708-amino-acid chain: Solute carrier family 15 member 1 (708 aa).

Residues 1–21 (MGMSKSHSFFGYPLSIFFIVV) traverse the membrane as a helical segment. Residues 22–53 (NEFCERFSYYGMRAILILYFTNFISWDDNLST) lie on the Extracellular side of the membrane. N-linked (GlcNAc...) asparagine glycosylation occurs at Asn-50. Residues 54–74 (AIYHTFVALCYLTPILGALIA) traverse the membrane as a helical segment. Over 75 to 82 (DSWLGKFK) the chain is Cytoplasmic. A helical transmembrane segment spans residues 83–103 (TIVSLSIVYTIGQAVTSVSSI). Residues 104–118 (NDLTDHNHDGTPDSL) are Extracellular-facing. The chain crosses the membrane as a helical span at residues 119 to 139 (PVHVVLSLIGLALIALGTGGI). Topologically, residues 140 to 161 (KPCVSAFGGDQFEEGQEKQRNR) are cytoplasmic. A helical membrane pass occupies residues 162–182 (FFSIFYLAINAGSLLSTIITP). Residues 183–198 (MLRVQQCGIHSKQACY) are Extracellular-facing. Residues 199–219 (PLAFGVPAALMAVALIVFVLG) form a helical membrane-spanning segment. Topologically, residues 220–276 (SGMYKKFKPQGNIMGKVAKCIGFAIKNRFRHRSKAFPKREHWLDWAKEKYDERLISQ) are cytoplasmic. Residues 277 to 297 (IKMVTRVMFLYIPLPMFWALF) form a helical membrane-spanning segment. Topologically, residues 298 to 327 (DQQGSRWTLQATTMSGKIGALEIQPDQMQT) are extracellular. The helical transmembrane segment at 328–348 (VNAILIVIMVPIFDAVLYPLI) threads the bilayer. At 349–361 (AKCGFNFTSLKKM) the chain is on the cytoplasmic side. The chain crosses the membrane as a helical span at residues 362-382 (AVGMVLASMAFVVAAIVQVEI). Residues 383-584 (DKTLPVFPKG…SANTVNMALQ (202 aa)) are Extracellular-facing. Positions 383–584 (DKTLPVFPKG…SANTVNMALQ (202 aa)) are extracellular domain (ECD). Residues Asn-404, Asn-408, Asn-439, Asn-509, Asn-514, and Asn-562 are each glycosylated (N-linked (GlcNAc...) asparagine). Residues 585-605 (IPQYFLLTCGEVVFSVTGLEF) traverse the membrane as a helical segment. The Cytoplasmic portion of the chain corresponds to 606-619 (SYSQAPSNMKSVLQ). A helical membrane pass occupies residues 620–640 (AGWLLTVAVGNIIVLIVAGAG). The Extracellular portion of the chain corresponds to 641-645 (QFSKQ). A helical membrane pass occupies residues 646 to 666 (WAEYILFAALLLVVCVIFAIM). Over 667-708 (ARFYTYINPAEIEAQFDEDEKKNRLEKSNPYFMSGANSQKQM) the chain is Cytoplasmic.

This sequence belongs to the major facilitator superfamily. Proton-dependent oligopeptide transporter (POT/PTR) (TC 2.A.17) family. Interacts (via extracellular domain region) with trypsin. In terms of tissue distribution, expressed in small intestine.

The protein resides in the apical cell membrane. It catalyses the reaction a dipeptide(out) + H(+)(out) = a dipeptide(in) + H(+)(in). The catalysed reaction is an L-amino acid tripeptide(out) + H(+)(out) = an L-amino acid tripeptide(in) + H(+)(in). It carries out the reaction L-alanyl-L-lysine(out) + H(+)(out) = L-alanyl-L-lysine(in) + H(+)(in). The enzyme catalyses L-alanyl-L-proline(out) + H(+)(out) = L-alanyl-L-proline(in) + H(+)(in). It catalyses the reaction L-alanyl-L-valine(out) + H(+)(out) = L-alanyl-L-valine(in) + H(+)(in). The catalysed reaction is carnosine(out) + H(+)(out) = carnosine(in) + H(+)(in). It carries out the reaction glycyl-L-glutamine(out) + H(+)(out) = glycyl-L-glutamine(in) + H(+)(in). The enzyme catalyses glycyl-L-leucine(out) + H(+)(out) = glycyl-L-leucine(in) + H(+)(in). It catalyses the reaction glycyl-L-proline(out) + H(+)(out) = glycyl-L-proline(in) + H(+)(in). The catalysed reaction is glycyl-sarcosine(out) + H(+)(out) = glycyl-sarcosine(in) + H(+)(in). It carries out the reaction L-leucyl-L-leucine(out) + H(+)(out) = L-leucyl-L-leucine(in) + H(+)(in). The enzyme catalyses L-leucyl-L-proline(out) + H(+)(out) = L-leucyl-L-proline(in) + H(+)(in). It catalyses the reaction L-phenylalanyl-L-leucine(out) + H(+)(out) = L-phenylalanyl-L-leucine(in) + H(+)(in). The catalysed reaction is L-phenylalanyl-L-phenylalanine(out) + H(+)(out) = L-phenylalanyl-L-phenylalanine(in) + H(+)(in). It carries out the reaction L-lysyl-glycine(out) + H(+)(out) = L-lysyl-glycine(in) + H(+)(in). The enzyme catalyses L-tyrosylglycine(out) + H(+)(out) = L-tyrosylglycine(in) + H(+)(in). It catalyses the reaction L-alanyl-L-aspartate(out) + 2 H(+)(out) = L-alanyl-L-aspartate(in) + 2 H(+)(in). The catalysed reaction is L-aspartyl-glycine(out) + 2 H(+)(out) = L-aspartyl-glycine(in) + 2 H(+)(in). It carries out the reaction glycyl-L-aspartate(out) + 2 H(+)(out) = glycyl-L-aspartate(in) + 2 H(+)(in). The enzyme catalyses glycyl-L-glutamate(out) + 2 H(+)(out) = glycyl-L-glutamate(in) + 2 H(+)(in). It catalyses the reaction L-alanyl-L-leucyl-L-alanine(out) + H(+)(out) = L-alanyl-L-leucyl-L-alanine(in) + H(+)(in). The catalysed reaction is L-alanyl-L-prolylglycine(out) + H(+)(out) = L-alanyl-L-prolylglycine(in) + H(+)(in). It carries out the reaction glycylglycyl-L-isoleucine(out) + H(+)(out) = glycylglycyl-L-isoleucine(in) + H(+)(in). The enzyme catalyses glycylglycyl-L-proline(out) + H(+)(out) = glycylglycyl-L-proline(in) + H(+)(in). It catalyses the reaction L-methionyl-L-phenylalanyl-L-methionine(out) + H(+)(out) = L-methionyl-L-phenylalanyl-L-methionine(in) + H(+)(in). The catalysed reaction is N-acetyl-D-muramoyl-L-alanyl-D-isoglutamine(out) + 2 H(+)(out) = N-acetyl-D-muramoyl-L-alanyl-D-isoglutamine(in) + 2 H(+)(in). It carries out the reaction N(alpha)-formyl-L-methionyl-L-leucyl-L-phenylalanine(out) + 2 H(+)(out) = N(alpha)-formyl-L-methionyl-L-leucyl-L-phenylalanine(in) + 2 H(+)(in). Its function is as follows. Electrogenic proton-coupled amino-acid transporter that transports oligopeptides of 2 to 4 amino acids with a preference for dipeptides. Transports neutral and monovalently charged peptides with a proton to peptide stoichiometry of 1:1 or 2:1. Primarily responsible for the absorption of dietary di- and tripeptides from the small intestinal lumen. Mediates transepithelial transport of muramyl and N-formylated bacterial dipeptides contributing to recognition of pathogenic bacteria by the mucosal immune system. The polypeptide is Solute carrier family 15 member 1 (Homo sapiens (Human)).